The chain runs to 73 residues: Dermaseptin-H4 (73 aa).

Positions 1–22 (MAFMKKSLFLVLFLGMVSLSIC) are cleaved as a signal peptide. The propeptide occupies 23–43 (EEEKRENEDEAKQEDDEQSEM). Residues 25 to 45 (EKRENEDEAKQEDDEQSEMKR) are disordered. Acidic residues predominate over residues 30-40 (EDEAKQEDDEQ). Leu-70 is subject to Leucine amide. Positions 72 to 73 (EQ) are excised as a propeptide.

In terms of tissue distribution, expressed by the skin glands.

The protein localises to the secreted. Has antibacterial activity against the Gram-negative bacteria E.coli ATCC 11775 (MIC=0.8 uM), and the Gram-positive bacteria S.aureus ATCC 12600 (MIC=0.4 uM) and M.luteus ATCC 49732 (MIC=0.8 uM). Does not inhibit the growth of the fungus C.albicans. Probably acts by disturbing membrane functions with its amphipathic structure. The chain is Dermaseptin-H4 from Pithecopus azureus (Orange-legged monkey tree frog).